The following is a 243-amino-acid chain: Carboxy-S-adenosyl-L-methionine synthase (243 aa).

S-adenosyl-L-methionine contacts are provided by residues Tyr40, 65-67 (GCS), 90-91 (DN), 118-119 (DI), Asn133, and Arg200.

This sequence belongs to the class I-like SAM-binding methyltransferase superfamily. Cx-SAM synthase family. Homodimer.

The enzyme catalyses prephenate + S-adenosyl-L-methionine = carboxy-S-adenosyl-L-methionine + 3-phenylpyruvate + H2O. In terms of biological role, catalyzes the conversion of S-adenosyl-L-methionine (SAM) to carboxy-S-adenosyl-L-methionine (Cx-SAM). The polypeptide is Carboxy-S-adenosyl-L-methionine synthase (Shewanella halifaxensis (strain HAW-EB4)).